Consider the following 955-residue polypeptide: Glycine dehydrogenase (decarboxylating) (955 aa).

Position 702 is an N6-(pyridoxal phosphate)lysine (K702).

It belongs to the GcvP family. As to quaternary structure, the glycine cleavage system is composed of four proteins: P, T, L and H. Pyridoxal 5'-phosphate is required as a cofactor.

The enzyme catalyses N(6)-[(R)-lipoyl]-L-lysyl-[glycine-cleavage complex H protein] + glycine + H(+) = N(6)-[(R)-S(8)-aminomethyldihydrolipoyl]-L-lysyl-[glycine-cleavage complex H protein] + CO2. Functionally, the glycine cleavage system catalyzes the degradation of glycine. The P protein binds the alpha-amino group of glycine through its pyridoxal phosphate cofactor; CO(2) is released and the remaining methylamine moiety is then transferred to the lipoamide cofactor of the H protein. The chain is Glycine dehydrogenase (decarboxylating) from Stenotrophomonas maltophilia (strain R551-3).